A 615-amino-acid chain; its full sequence is Aspartokinase (615 aa).

Disordered stretches follow at residues 84 to 105 and 127 to 171; these read ALQPAMSSSGDGRSGSMSGTAT and SSVS…SISQ. Composition is skewed to low complexity over residues 90 to 102 and 127 to 164; these read SSSGDGRSGSMSG and SSVSSLSQLESQLGRSGSPSPFQSSSSRSPPRSPATPS. The ACT domain occupies 467-537; it reads IHSNRKTLSH…EVTVSKDMAI (71 aa).

It belongs to the aspartokinase family.

The catalysed reaction is L-aspartate + ATP = 4-phospho-L-aspartate + ADP. The protein operates within amino-acid biosynthesis; L-methionine biosynthesis via de novo pathway; L-homoserine from L-aspartate: step 1/3. It participates in amino-acid biosynthesis; L-threonine biosynthesis; L-threonine from L-aspartate: step 1/5. In terms of biological role, phosphorylates aspartate, the first step in the biosynthesis of amino acids that derive from aspartate (the aspartate family of amino acids), including methioinine and threonine, the latter of which is a precursor to isoleucine. This is Aspartokinase from Cryptococcus neoformans var. grubii serotype A (strain H99 / ATCC 208821 / CBS 10515 / FGSC 9487) (Filobasidiella neoformans var. grubii).